The following is a 135-amino-acid chain: Large ribosomal subunit protein uL16c (135 aa).

It belongs to the universal ribosomal protein uL16 family. As to quaternary structure, part of the 50S ribosomal subunit.

The protein resides in the plastid. The protein localises to the chloroplast. The sequence is that of Large ribosomal subunit protein uL16c from Nymphaea alba (White water-lily).